Consider the following 795-residue polypeptide: Histidine biosynthesis trifunctional protein (795 aa).

A phosphoribosyl-AMP cyclohydrolase region spans residues 1-225 (MLPVVPVFNA…VVRQGGSGSF (225 aa)). The segment at 226 to 308 (CHLETESCFG…FYFAMARLVA (83 aa)) is phosphoribosyl-ATP pyrophosphohydrolase. The tract at residues 309–795 (NGVSLEDVER…KLGLLPSGFE (487 aa)) is histidinol dehydrogenase. The Zn(2+) site is built by Gln-614 and His-617. Catalysis depends on residues Glu-683 and His-684. Asp-717 and His-776 together coordinate Zn(2+).

The protein in the C-terminal section; belongs to the histidinol dehydrogenase family. It depends on Zn(2+) as a cofactor.

The catalysed reaction is 1-(5-phospho-beta-D-ribosyl)-5'-AMP + H2O = 1-(5-phospho-beta-D-ribosyl)-5-[(5-phospho-beta-D-ribosylamino)methylideneamino]imidazole-4-carboxamide. It carries out the reaction 1-(5-phospho-beta-D-ribosyl)-ATP + H2O = 1-(5-phospho-beta-D-ribosyl)-5'-AMP + diphosphate + H(+). It catalyses the reaction L-histidinol + 2 NAD(+) + H2O = L-histidine + 2 NADH + 3 H(+). It participates in amino-acid biosynthesis; L-histidine biosynthesis; L-histidine from 5-phospho-alpha-D-ribose 1-diphosphate: step 2/9. It functions in the pathway amino-acid biosynthesis; L-histidine biosynthesis; L-histidine from 5-phospho-alpha-D-ribose 1-diphosphate: step 3/9. Its pathway is amino-acid biosynthesis; L-histidine biosynthesis; L-histidine from 5-phospho-alpha-D-ribose 1-diphosphate: step 9/9. This chain is Histidine biosynthesis trifunctional protein (HIS4), found in Kluyveromyces lactis (strain ATCC 8585 / CBS 2359 / DSM 70799 / NBRC 1267 / NRRL Y-1140 / WM37) (Yeast).